The following is a 1162-amino-acid chain: MQDDLDGIVRHRRRSLSFLQIVTLTMAGLVAFDPAQVLAGHPTTDSELQTAGSPRPPGLEHCVDQEERRVARRLLYISTLDGRLSALDIAKSGKLRWSVPTGPGPLISSSIHRLELTNNGQFVRMIPSLSGGIYKFDGDSIDPIPITAEHLLSSSAKFSDDLVISGGKETRSYGVSVRTGQLLYECSLNGCVNSTEEGLAIDDTIREPDEEDQLEDGEQLRDEAGYIVRHDPLLDDVIIVRRQTQTVRAVESRTGVERWNFSVGQHELDLVRPSECQLQPRDELELAVLDVDIKVVVPEGIICAFSKSEPQTMLWKYKFDHPIVSAWNTNADDELQPIDLFSSAQWLWDQDENDTELPNAPQSPPSIYLGMYDKQLYIQESIRLRQEIMDQTKVYQQLTGDTSLMPRIPWKPISASSKSLVIFRKDQEDPEMIAEGAVAQGGELVPYDDENFAVAAQSVLNASEFVNGNGFYFYTTGDLNGPQECSTQNNPTDLPAITAPTSPTNATSEGTEATGNHSVNDDLGFSLDDIDAPVKVVILSLWFWWKEIVVIAFTSAVILNIFMGQRNQRVEREYLVIERHVPVQTAIEATEASTQALLGPVVPMQRPGNRFSFPPGQANQRTISESTTHSGEHYTSRFQSDFELMQCLGRGGFGVVFEAKNKLDENRYAIKRITLPNKESSRQRVLREARTLASCEHHNIVRYFHSWTETPPTGWQEEEDRKLLAHELSTSIQIETPDDSTMPSLTEQLKEKRQQQLLSWVSDAANSTACSHDFHLPGESSLKNIREEYDYDEEEDSLIEFRSESQSAALRAEEEDDTDDDYEEDEEQQGDHEKRHRSSVSIDIHSASFDLKNINYSQHQLVSNSFQIESVRPKSSGSDDANDDNKARRKPLTLALAQNHNNNQNGSQPTPSSATILNGTVAKPSKVYLYIQMQLCRKESLRDWLRDNRSETRAAHIGDIFHQIVDAVDYVHLKGLIHRDLKPSNIFFSQDGQIKIGDFGLVTDMADIPNLVAKCGDQSGLPSCARHTQQVGTHLYMSPEQLLGQHYDYKVDIYSLGLIFFELHVYFSTEMERIKTLRSLRDGQYPKDFAVNYPQQYDLLQQMLSAQPEQRPQTKQLKSQLRNILQLPHLLSEGQSEQAELAERARRLSRSRTFSSSSEPHQ.

The N-terminal stretch at 1–39 is a signal peptide; that stretch reads MQDDLDGIVRHRRRSLSFLQIVTLTMAGLVAFDPAQVLA. Over 40 to 537 the chain is Lumenal; that stretch reads GHPTTDSELQ…DDIDAPVKVV (498 aa). 6 N-linked (GlcNAc...) asparagine glycosylation sites follow: Asn193, Asn260, Asn353, Asn461, Asn505, and Asn516. The tract at residues 498–517 is disordered; the sequence is TAPTSPTNATSEGTEATGNH. A compositionally biased stretch (polar residues) spans 499–517; that stretch reads APTSPTNATSEGTEATGNH. Residues 538–558 traverse the membrane as a helical segment; that stretch reads ILSLWFWWKEIVVIAFTSAVI. Over 559–1162 the chain is Cytoplasmic; that stretch reads LNIFMGQRNQ…TFSSSSEPHQ (604 aa). A Phosphoserine modification is found at Ser624. The Protein kinase domain maps to 642–1130; the sequence is FELMQCLGRG…LRNILQLPHL (489 aa). ATP contacts are provided by residues 648–656 and Lys671; that span reads LGRGGFGVV. Ser797 carries the post-translational modification Phosphoserine. The segment at 801–839 is disordered; the sequence is FRSESQSAALRAEEEDDTDDDYEEDEEQQGDHEKRHRSS. Positions 813-828 are enriched in acidic residues; the sequence is EEEDDTDDDYEEDEEQ. Thr818 carries the post-translational modification Phosphothreonine. Catalysis depends on Asp980, which acts as the Proton acceptor. Thr1028 bears the Phosphothreonine mark. The tract at residues 1135 to 1162 is disordered; that stretch reads QSEQAELAERARRLSRSRTFSSSSEPHQ. Low complexity predominate over residues 1151 to 1162; sequence SRTFSSSSEPHQ.

This sequence belongs to the protein kinase superfamily. Ser/Thr protein kinase family. GCN2 subfamily. In terms of assembly, forms dimers with HSPA5/BIP in resting cells. Oligomerizes in ER-stressed cells. In terms of processing, autophosphorylated. Post-translationally, N-glycosylated.

The protein localises to the endoplasmic reticulum membrane. The enzyme catalyses L-seryl-[protein] + ATP = O-phospho-L-seryl-[protein] + ADP + H(+). It carries out the reaction L-threonyl-[protein] + ATP = O-phospho-L-threonyl-[protein] + ADP + H(+). Its activity is regulated as follows. Perturbation in protein folding in the endoplasmic reticulum (ER) promotes reversible dissociation from HSPA5/BIP and oligomerization, resulting in transautophosphorylation and kinase activity induction. Its function is as follows. Phosphorylates the alpha subunit of eukaryotic translation-initiation factor 2 (EIF2), leading to its inactivation and thus to a rapid reduction of translational initiation and repression of global protein synthesis. The chain is Eukaryotic translation initiation factor 2-alpha kinase (PEK) from Drosophila melanogaster (Fruit fly).